The primary structure comprises 242 residues: Probable derlin-1 homolog (242 aa).

Residues 1 to 18 (MDGVKEWFNSIPPVSRYM) are Cytoplasmic-facing. The chain crosses the membrane as a helical span at residues 19 to 39 (FAIFLGIPVLAAMHLISFNYL). Over 40-98 (YLDFTFTFKHFHLWRLITAPCIISSLGPMFLFNLIFFYQYTTRLESLNYAGKSDDYLFC) the chain is Lumenal. A helical transmembrane segment spans residues 99 to 119 (IIFISICNIIFGLIFEYYFLG). Residues 120–140 (TMTIMSLIYIYSRMNPTGTSN) are Cytoplasmic-facing. A helical membrane pass occupies residues 141-161 (FYGFFSFKTIYLPWVFLVAHF). Residues 162 to 167 (LQTGHP) are Lumenal-facing. Residues 168-188 (PYSDFLAIVSGHIFFYLTDIY) traverse the membrane as a helical segment. The Cytoplasmic segment spans residues 189–242 (PRANGVPALIKTPKFITNIFNKGDRNPNNVRRDPRTGRPIQEGGYNWGQGHALG). Residues 214-224 (NPNNVRRDPRT) are compositionally biased toward basic and acidic residues. The interval 214–242 (NPNNVRRDPRTGRPIQEGGYNWGQGHALG) is disordered. A compositionally biased stretch (gly residues) spans 233–242 (YNWGQGHALG).

It belongs to the derlin family.

The protein resides in the endoplasmic reticulum membrane. May be involved in the degradation process of specific misfolded endoplasmic reticulum (ER) luminal proteins. May also involved in endoplasmic reticulum stress-induced pre-emptive quality control, a mechanism that selectively attenuates the translocation of newly synthesized proteins into the endoplasmic reticulum and reroutes them to the cytosol for proteasomal degradation. This is Probable derlin-1 homolog from Dictyostelium discoideum (Social amoeba).